A 245-amino-acid chain; its full sequence is tRNA1(Val) (adenine(37)-N6)-methyltransferase (245 aa).

It belongs to the methyltransferase superfamily. tRNA (adenine-N(6)-)-methyltransferase family.

The protein resides in the cytoplasm. It catalyses the reaction adenosine(37) in tRNA1(Val) + S-adenosyl-L-methionine = N(6)-methyladenosine(37) in tRNA1(Val) + S-adenosyl-L-homocysteine + H(+). In terms of biological role, specifically methylates the adenine in position 37 of tRNA(1)(Val) (anticodon cmo5UAC). The sequence is that of tRNA1(Val) (adenine(37)-N6)-methyltransferase from Escherichia coli O139:H28 (strain E24377A / ETEC).